The chain runs to 359 residues: MVKLFIGNLPREATEQEIRSLFEQYGKVLECDIIKNYGFVHIEDKTAAEDAIRNLHHYKLHGVNINVEASKNKSKASTKLHVGNISPTCTNQELRAKFEEYGPVIECDIVKDYAFVHMERAEDAVEAIRGLDNTEFQGKRMHVQLSTSRLRTAPGMGDQSGCYRCGKEGHWSKECPVDRTGRVADFTEQYNEQYGAVRPPYTMGYGESMYYNDAYGALDYYKRYRVRSYEAVAAAAAASAYNYAEQTMSHLPQVQSTAVTSHLNSTSVDPYDRHLLPNSGAAATSAAMAAAAATTSSYYGRDRSPLRRAAAVLPTVGEGYGYGPESELSQASAAARNSLYDMARYEREQYVDRARYSAF.

RRM domains are found at residues 2-72 (VKLF…ASKN) and 78-148 (TKLH…LSTS). The CCHC-type zinc finger occupies 160 to 177 (SGCYRCGKEGHWSKECPV). Residues 196 to 359 (AVRPPYTMGY…YVDRARYSAF (164 aa)) are interaction with TNPO3.

Interacts with TNPO3, which may mediate nuclear import of the protein.

Its subcellular location is the nucleus. It is found in the nucleolus. Functionally, required for the translational activation of PER1 mRNA in response to circadian clock. Binds directly to the 3'-UTR of the PER1 mRNA. The sequence is that of RNA-binding protein 4B (RBM4B) from Sus scrofa (Pig).